The primary structure comprises 437 residues: Enolase (437 aa).

(2R)-2-phosphoglycerate is bound at residue glutamine 162. The active-site Proton donor is the glutamate 204. Residues aspartate 251, glutamate 297, and aspartate 324 each contribute to the Mg(2+) site. (2R)-2-phosphoglycerate contacts are provided by lysine 349, arginine 378, serine 379, and lysine 400. The active-site Proton acceptor is the lysine 349.

It belongs to the enolase family. The cofactor is Mg(2+).

It localises to the cytoplasm. Its subcellular location is the secreted. It is found in the cell surface. The enzyme catalyses (2R)-2-phosphoglycerate = phosphoenolpyruvate + H2O. It functions in the pathway carbohydrate degradation; glycolysis; pyruvate from D-glyceraldehyde 3-phosphate: step 4/5. Its function is as follows. Catalyzes the reversible conversion of 2-phosphoglycerate (2-PG) into phosphoenolpyruvate (PEP). It is essential for the degradation of carbohydrates via glycolysis. The chain is Enolase from Chlorobaculum parvum (strain DSM 263 / NCIMB 8327) (Chlorobium vibrioforme subsp. thiosulfatophilum).